We begin with the raw amino-acid sequence, 105 residues long: UPF0235 protein CT1832 (105 aa).

It belongs to the UPF0235 family.

The sequence is that of UPF0235 protein CT1832 from Chlorobaculum tepidum (strain ATCC 49652 / DSM 12025 / NBRC 103806 / TLS) (Chlorobium tepidum).